The primary structure comprises 335 residues: MSTEGGFGGTSSSDAQQSLQSFWPRVMEEIRNLTVKDFRVQELPLARIKKIMKLDEDVKMISAEAPVLFAKAAQIFITELTLRAWIHTEDNKRRTLQRNDIAMAITKFDQFDFLIDIVPRDELKPPKRQEDVRQSVTPAEPVQYYFTLAQQPAAVQVQGQQQGQQTTSSTTTIQPGQIIIAQPQQGQTTPVTMQVGEGQQVQIVQAQPQGQAQQAQSGTGQTMQVMQQIITNTGEIQQIPVQLNAGQLQYIRLAQPVSGTQVVQGQIQTLATNAQQITQTEVQQGQQQFSQFTDGQQLYQIQQVTMPAGQDLAQPMFIQSANQPSDGQAPQVTGD.

This sequence belongs to the NFYC/HAP5 subunit family. In terms of assembly, heterotrimeric transcription factor composed of three components, NF-YA, NF-YB and NF-YC. NF-YB and NF-YC must interact and dimerize for NF-YA association and DNA binding.

Its subcellular location is the nucleus. In terms of biological role, component of the sequence-specific heterotrimeric transcription factor (NF-Y) which specifically recognizes a 5'-CCAAT-3' box motif found in the promoters of its target genes. NF-Y can function as both an activator and a repressor, depending on its interacting cofactors. This Pongo abelii (Sumatran orangutan) protein is Nuclear transcription factor Y subunit gamma (NFYC).